Consider the following 223-residue polypeptide: Type III pantothenate kinase (223 aa).

Position 17–24 (17–24 (DIGNTRIH)) interacts with ATP. Residues Tyr-81 and 85–88 (GIDR) contribute to the substrate site. Asp-87 (proton acceptor) is an active-site residue. Residue Asp-102 participates in K(+) binding. Ser-105 lines the ATP pocket. Residue Thr-157 coordinates substrate.

It belongs to the type III pantothenate kinase family. Homodimer. The cofactor is NH4(+). Requires K(+) as cofactor.

It localises to the cytoplasm. It catalyses the reaction (R)-pantothenate + ATP = (R)-4'-phosphopantothenate + ADP + H(+). Its pathway is cofactor biosynthesis; coenzyme A biosynthesis; CoA from (R)-pantothenate: step 1/5. Functionally, catalyzes the phosphorylation of pantothenate (Pan), the first step in CoA biosynthesis. This Helicobacter pylori (strain J99 / ATCC 700824) (Campylobacter pylori J99) protein is Type III pantothenate kinase.